The sequence spans 134 residues: Translation initiation factor 2 subunit beta (134 aa).

Belongs to the eIF-2-beta/eIF-5 family. Heterotrimer composed of an alpha, a beta and a gamma chain.

Its function is as follows. eIF-2 functions in the early steps of protein synthesis by forming a ternary complex with GTP and initiator tRNA. The polypeptide is Translation initiation factor 2 subunit beta (Pyrobaculum neutrophilum (strain DSM 2338 / JCM 9278 / NBRC 100436 / V24Sta) (Thermoproteus neutrophilus)).